The sequence spans 1169 residues: Integrin alpha-X (1169 aa).

Residues 1 to 19 (MSCTWIAFLLLLGFVSCLG) form the signal peptide. At 20–1116 (FNLDAEKLTH…EMYKVHNPVP (1097 aa)) the chain is on the extracellular side. 2 FG-GAP repeats span residues 23–78 (DAEK…NCEP) and 79–138 (ISLQ…QSQN). Cysteines 69 and 76 form a disulfide. N-linked (GlcNAc...) asparagine glycosylation is present at Asn-89. Intrachain disulfides connect Cys-108–Cys-126 and Cys-116–Cys-146. The VWFA domain occupies 152 to 330 (DIVFLIDGSG…DALKDIENQL (179 aa)). Mg(2+)-binding residues include Asp-158, Ser-160, Ser-162, and Asp-260. N-linked (GlcNAc...) asparagine glycosylation is present at Asn-267. FG-GAP repeat units lie at residues 341-392 (ETPS…PTFI), 393-444 (NMSQ…SRHW), 445-505 (RPKS…GSRW), 508-566 (GTTL…QDIA), and 571-631 (QRIS…FTPA). An N-linked (GlcNAc...) asparagine glycan is attached at Asn-393. Residues Asp-467, Asp-469, Asp-471, and Asp-475 each contribute to the Ca(2+) site. The cysteines at positions 496 and 507 are disulfide-linked. Ca(2+) contacts are provided by Asp-531, Asn-533, Asp-535, Asp-539, Asp-594, Asp-598, and Asp-602. Intrachain disulfides connect Cys-640–Cys-721 and Cys-656–Cys-711. An N-linked (GlcNAc...) asparagine glycan is attached at Asn-734. Intrachain disulfides connect Cys-770/Cys-776 and Cys-858/Cys-873. Residue Asn-949 is glycosylated (N-linked (GlcNAc...) asparagine). Disulfide bonds link Cys-1007/Cys-1031 and Cys-1036/Cys-1041. N-linked (GlcNAc...) asparagine glycans are attached at residues Asn-1059 and Asn-1084. Residues 1117–1137 (LIVGSSVGGLLLLAIITAILY) form a helical membrane-spanning segment. Topologically, residues 1138 to 1169 (KAGFFKRQYKEMLEEANGQFVSDGTPTPQVAQ) are cytoplasmic. Positions 1140–1144 (GFFKR) match the GFFKR motif motif.

This sequence belongs to the integrin alpha chain family. In terms of assembly, heterodimer of an alpha and a beta subunit. Alpha-X associates with beta-2.

It is found in the membrane. Functionally, integrin alpha-X/beta-2 is a receptor for fibrinogen. It recognizes the sequence G-P-R in fibrinogen. It mediates cell-cell interaction during inflammatory responses. It is especially important in monocyte adhesion and chemotaxis. The sequence is that of Integrin alpha-X (Itgax) from Mus musculus (Mouse).